Reading from the N-terminus, the 437-residue chain is UDP-glucose 6-dehydrogenase (437 aa).

Positions 11, 30, 35, 86, 122, and 155 each coordinate NAD(+). Substrate contacts are provided by residues 151–155, K209, N213, 254–258, and G262; these read EFLRE and FLHAG. C265 serves as the catalytic Nucleophile. K268 lines the NAD(+) pocket. K326 lines the substrate pocket. R333 is a binding site for NAD(+).

It belongs to the UDP-glucose/GDP-mannose dehydrogenase family.

The enzyme catalyses UDP-alpha-D-glucose + 2 NAD(+) + H2O = UDP-alpha-D-glucuronate + 2 NADH + 3 H(+). The protein operates within nucleotide-sugar biosynthesis; UDP-alpha-D-glucuronate biosynthesis; UDP-alpha-D-glucuronate from UDP-alpha-D-glucose: step 1/1. Its pathway is capsule biogenesis; capsule polysaccharide biosynthesis. This Rhizobium meliloti (strain 1021) (Ensifer meliloti) protein is UDP-glucose 6-dehydrogenase.